Consider the following 62-residue polypeptide: Photosystem II reaction center protein Z (62 aa).

A run of 2 helical transmembrane segments spans residues 8-28 (SVFA…VALA) and 41-61 (FSGV…NSFI).

This sequence belongs to the PsbZ family. In terms of assembly, PSII is composed of 1 copy each of membrane proteins PsbA, PsbB, PsbC, PsbD, PsbE, PsbF, PsbH, PsbI, PsbJ, PsbK, PsbL, PsbM, PsbT, PsbY, PsbZ, Psb30/Ycf12, at least 3 peripheral proteins of the oxygen-evolving complex and a large number of cofactors. It forms dimeric complexes.

It is found in the plastid. The protein localises to the chloroplast thylakoid membrane. Functionally, may control the interaction of photosystem II (PSII) cores with the light-harvesting antenna, regulates electron flow through the 2 photosystem reaction centers. PSII is a light-driven water plastoquinone oxidoreductase, using light energy to abstract electrons from H(2)O, generating a proton gradient subsequently used for ATP formation. This Cryptomeria japonica (Japanese cedar) protein is Photosystem II reaction center protein Z.